Consider the following 152-residue polypeptide: Ribosome maturation factor RimP (152 aa).

The protein belongs to the RimP family.

It localises to the cytoplasm. Required for maturation of 30S ribosomal subunits. This is Ribosome maturation factor RimP from Proteus mirabilis (strain HI4320).